We begin with the raw amino-acid sequence, 558 residues long: Protein OS-9 homolog (558 aa).

Residues 1–17 form the signal peptide; it reads MLLKSLALIASSSLAAT. The N-linked (GlcNAc...) asparagine glycan is linked to asparagine 68. The region spanning 111-237 is the MRH domain; it reads GDCLFYEQGF…QVGTPRLCKD (127 aa). An intrachain disulfide couples cysteine 113 to cysteine 126. Positions 133, 197, 219, and 225 each coordinate a mannooligosaccharide derivative. 2 disulfides stabilise this stretch: cysteine 190/cysteine 223 and cysteine 205/cysteine 235. Disordered regions lie at residues 435 to 508 and 539 to 558; these read SKKL…DEDE and KDLADKEDDDDDYEDYGLSD. Over residues 441 to 466 the composition is skewed to basic and acidic residues; sequence KKEAASTKREEAKKQVEASVEEKAVD. The segment covering 474–492 has biased composition (polar residues); the sequence is DTVTSTQTFFRTQTLSTAE. Residues 543–558 are compositionally biased toward acidic residues; it reads DKEDDDDDYEDYGLSD.

It belongs to the OS-9 family. In terms of assembly, interacts with missfolded ER lumenal proteins.

Its subcellular location is the endoplasmic reticulum membrane. Lectin involved in the quality control of the secretory pathway. As a member of the endoplasmic reticulum-associated degradation lumenal (ERAD-L) surveillance system, targets misfolded endoplasmic reticulum lumenal glycoproteins for degradation. This is Protein OS-9 homolog (YOS9) from Yarrowia lipolytica (strain CLIB 122 / E 150) (Yeast).